The sequence spans 396 residues: Beta-1,4-galactosyltransferase 3 (396 aa).

Residues 1–10 (MLRRLLERPC) are Cytoplasmic-facing. The chain crosses the membrane as a helical; Signal-anchor for type II membrane protein span at residues 11 to 31 (TLALLVGSQLAVMMYLSLGGF). Topologically, residues 32 to 396 (RSLSALFGRE…ANHTAPHGSH (365 aa)) are lumenal. The N-linked (GlcNAc...) asparagine glycan is linked to asparagine 57. A disulfide bridge connects residues cysteine 80 and cysteine 122. 133-137 (PHRAR) provides a ligand contact to UDP-alpha-D-galactose. Asparagine 169 carries an N-linked (GlcNAc...) asparagine glycan. UDP-alpha-D-galactose is bound by residues 172–174 (FNR), 199–200 (VD), tyrosine 229, and tryptophan 261. Cysteines 193 and 212 form a disulfide. Residue aspartate 200 participates in Mn(2+) binding. 263–266 (GEDD) contacts N-acetyl-D-glucosamine. Residue histidine 294 participates in Mn(2+) binding. Residue 294–296 (HRG) coordinates UDP-alpha-D-galactose. Position 306 (arginine 306) interacts with N-acetyl-D-glucosamine. Residue asparagine 340 is glycosylated (N-linked (GlcNAc...) asparagine). The segment at 341–396 (ITADIGTDPRGPRTSSGPHYPPGSSQAFRQEMLQRRPPARPGPLPTANHTAPHGSH) is disordered. The segment covering 353 to 368 (RTSSGPHYPPGSSQAF) has biased composition (polar residues). Residue asparagine 388 is glycosylated (N-linked (GlcNAc...) asparagine).

Belongs to the glycosyltransferase 7 family. Requires Mn(2+) as cofactor.

It is found in the golgi apparatus. The protein resides in the golgi stack membrane. It carries out the reaction an N-acetyl-beta-D-glucosaminyl derivative + UDP-alpha-D-galactose = a beta-D-galactosyl-(1-&gt;4)-N-acetyl-beta-D-glucosaminyl derivative + UDP + H(+). The catalysed reaction is N-acetyl-D-glucosamine + UDP-alpha-D-galactose = beta-D-galactosyl-(1-&gt;4)-N-acetyl-D-glucosamine + UDP + H(+). It catalyses the reaction a beta-D-GlcNAc-(1-&gt;3)-beta-D-Gal-(1-&gt;4)-beta-D-Glc-(1&lt;-&gt;1)-Cer(d18:1(4E)) + UDP-alpha-D-galactose = a neolactoside nLc4Cer(d18:1(4E)) + UDP + H(+). The enzyme catalyses a beta-D-glucosylceramide + UDP-alpha-D-galactose = a beta-D-galactosyl-(1-&gt;4)-beta-D-glucosyl-(1&lt;-&gt;1)-ceramide + UDP + H(+). It carries out the reaction a neolactoside IV(3)-beta-GlcNAc-nLc4Cer + UDP-alpha-D-galactose = a neolactoside nLc6Cer + UDP + H(+). The protein operates within protein modification; protein glycosylation. Its function is as follows. Responsible for the synthesis of complex-type N-linked oligosaccharides in many glycoproteins as well as the carbohydrate moieties of glycolipids. The polypeptide is Beta-1,4-galactosyltransferase 3 (B4GALT3) (Bos taurus (Bovine)).